The sequence spans 350 residues: uncharacterized protein (350 aa).

The span at lysine 197–serine 212 shows a compositional bias: basic and acidic residues. Positions lysine 197 to valine 217 are disordered.

The protein resides in the plastid. It localises to the chloroplast. This is an uncharacterized protein from Euglena gracilis.